The primary structure comprises 76 residues: DNA-directed RNA polymerase subunit epsilon (76 aa).

Belongs to the RNA polymerase subunit epsilon family. In terms of assembly, RNAP is composed of a core of 2 alpha, a beta and a beta' subunit. The core is associated with a delta subunit, and at least one of epsilon or omega. When a sigma factor is associated with the core the holoenzyme is formed, which can initiate transcription.

It catalyses the reaction RNA(n) + a ribonucleoside 5'-triphosphate = RNA(n+1) + diphosphate. In terms of biological role, a non-essential component of RNA polymerase (RNAP). This is DNA-directed RNA polymerase subunit epsilon from Streptococcus pyogenes serotype M1.